The primary structure comprises 164 residues: UPF0304 protein HSM_1818 (164 aa).

The protein belongs to the UPF0304 family.

The sequence is that of UPF0304 protein HSM_1818 from Histophilus somni (strain 2336) (Haemophilus somnus).